Reading from the N-terminus, the 249-residue chain is MEKTLKGIVLNSFDFRDYDKIITIYSNLYGKISLVCLGVNKTKSKNKYAINYLSYSNFEIFKAKNKLGLSKLKRSELINSFSHIATDFNLYVYANVLTSLVMNLEDHMKNYNLFKILKLSIFLINSKPNISFKVCILFMFYFLKIIGNQINLTVCGFCNSKINPIIAISFTNYCSSCKFCYFDDCLIIDNQLKNFINSIVKDDFIASLNQKISNQNLKILTKFVLSYYKDQVGIFTTSMYLLSTINQFK.

The protein belongs to the RecO family.

Its function is as follows. Involved in DNA repair and RecF pathway recombination. In Mycoplasma capricolum subsp. capricolum (strain California kid / ATCC 27343 / NCTC 10154), this protein is DNA repair protein RecO.